Reading from the N-terminus, the 812-residue chain is ISWI one complex protein 2 (812 aa).

Disordered regions lie at residues 1–21 (MRTKRTRGTRNVGASMPAGAA), 614–646 (MGNSHGNRRSSRRPQSTLEPSTKSSRPTDKRKP), 679–704 (AKQRKQQEDRERRKKMKEEKKRLEEL), and 762–812 (QTGS…PPTN). Over residues 627–638 (PQSTLEPSTKSS) the composition is skewed to polar residues. Residues 673–714 (ELKIIRAKQRKQQEDRERRKKMKEEKKRLEELAKKRELTESV) are a coiled coil. Basic and acidic residues predominate over residues 683–704 (KQQEDRERRKKMKEEKKRLEEL). A compositionally biased stretch (low complexity) spans 769 to 796 (PQAPQAPQTSQASIQPQQQQQQQQQQQP).

Component of the ISW1B complex, which at least consists of ISW1, IOC2 and IOC4.

Its subcellular location is the nucleus. Its function is as follows. Functions as a component of the ISW1B complex, which acts in remodeling the chromatin by catalyzing an ATP-dependent alteration in the structure of nucleosomal DNA. The ISW1B complex acts within coding regions to control the amount of RNA polymerase II released into productive elongation and to coordinate elongation with termination and pre-mRNA processing. In Saccharomyces cerevisiae (strain ATCC 204508 / S288c) (Baker's yeast), this protein is ISWI one complex protein 2 (IOC2).